A 644-amino-acid polypeptide reads, in one-letter code: Core protein VP4 (644 aa).

The protein belongs to the orbivirus VP4 family.

It localises to the virion. Its function is as follows. The VP4 protein is one of the five proteins (with VP1, VP3, VP6 and VP7) which form the inner capsid of the virus. In Bluetongue virus 13 (isolate USA) (BTV 13), this protein is Core protein VP4 (Segment-4).